Reading from the N-terminus, the 878-residue chain is Pyruvate, phosphate dikinase (878 aa).

The segment at 1-347 (MKKLIYYFGS…LYILQTRTAK (347 aa)) is N-terminal. Arg-96 contributes to the ATP binding site. Residues 348–404 (RTAIAAINIAVQMVEEKLISKEQALMRIDPESLNQLLHTRIDYSKGLTSIAEGLPAS) form a linker 1 region. The segment at 405–502 (PGAATGIAVF…VIKQGDIITI (98 aa)) is central. The residue at position 457 (Thr-457) is a Phosphothreonine; by PDRP1. The active-site Tele-phosphohistidine intermediate is His-459. Positions 503–537 (DGGSGKIFLGEMPLIQPTFSEESKLILDWADEISS) are linker 2. Positions 538-878 (LKVRANAETV…ASAQAKIKHG (341 aa)) are C-terminal. Residues Arg-565, Arg-621, Glu-749, Gly-770, Thr-771, Asn-772, and Asp-773 each coordinate substrate. Glu-749 is a Mg(2+) binding site. Asp-773 is a binding site for Mg(2+). Cys-835 functions as the Proton donor in the catalytic mechanism.

It belongs to the PEP-utilizing enzyme family. In terms of assembly, homodimer. Mg(2+) serves as cofactor. In terms of processing, phosphorylation of Thr-457 in the dark inactivates the enzyme. Dephosphorylation upon light stimulation reactivates the enzyme.

The enzyme catalyses pyruvate + phosphate + ATP = phosphoenolpyruvate + AMP + diphosphate + H(+). With respect to regulation, activated by light-induced dephosphorylation. Inhibited by dark-induced phosphorylation. Both reactions are catalyzed by PDRP1. Its function is as follows. Catalyzes the reversible phosphorylation of pyruvate and phosphate. This is Pyruvate, phosphate dikinase (ppdK) from Rickettsia felis (strain ATCC VR-1525 / URRWXCal2) (Rickettsia azadi).